The sequence spans 229 residues: Non-structural protein V (229 aa).

The tract at residues 28–115 (LGATSQPPPN…DTQSPSPSKT (88 aa)) is disordered. Positions 45-55 (KTEENNDETRT) are enriched in basic and acidic residues. Over residues 59–71 (SASAEAPAHASSP) the composition is skewed to low complexity. 2 stretches are compositionally biased toward polar residues: residues 82–97 (GKQS…NRPQ) and 105–115 (SDTQSPSPSKT). Zn(2+) contacts are provided by His-178, Cys-197, Cys-201, Cys-213, Cys-215, Cys-218, Cys-222, and Cys-225.

This sequence belongs to the paramyxoviruses V protein family.

Blocks host interferon signaling. The polypeptide is Non-structural protein V (P/V) (Human parainfluenza 4b virus (strain 68-333) (HPIV-4b)).